The chain runs to 670 residues: Pescadillo homolog (670 aa).

The stretch at glycine 292–phenylalanine 321 forms a coiled coil. One can recognise a BRCT domain in the interval lysine 316–isoleucine 402. Positions arginine 643–glutamine 670 are disordered. Basic and acidic residues predominate over residues glutamine 644 to tyrosine 662.

It belongs to the pescadillo family.

It is found in the nucleus. It localises to the nucleolus. Its subcellular location is the nucleoplasm. In terms of biological role, required for maturation of ribosomal RNAs and formation of the large ribosomal subunit. The chain is Pescadillo homolog from Leishmania braziliensis.